A 427-amino-acid polypeptide reads, in one-letter code: MTEFKISDLLVKPLSESFSCIVCTDLLSESHDKIQVNQCPHGHCLCSDCWTKQIENKKKECPICRAKVKLEFLSRNLFLESEFKKKKVYCKYQYKEEKEDGKIIKDEENGCKDIIRIEEMETHFKNCQYAFINCPNGDECKINSRFRKNQLEEHNKSCEYLKVPCQYCKTPIAKINKDHLESECQSYKIKCTHCKLEMLRMELSEHLEVCPEMTIQCKYKEGGCQVSFQRKHQANHLASENNHIGFIQNIIDQHRILLDESDRCFKRLKCSHETLEKRLTNINKYSNQWVIENWMQKVIDIPNDEVTSTKRVSCPMFYFNSRKYNVSCFPNGFTPANKDYISLYLHLHEASPNINIKFSFEIVNSDPTKSIKKEKNSYFQNDKGIGWEKFAECKTINTLGEGFVVGNKLTIKFEIEIPQTIDPLTTK.

The RING-type zinc finger occupies Cys-20–Arg-65. 2 TRAF-type zinc fingers span residues Thr-122–Asp-178 and Asp-178–Ala-234. The region spanning Lys-284 to Ile-415 is the MATH domain.

This sequence belongs to the TNF receptor-associated factor family. A subfamily.

Its subcellular location is the cytoplasm. In terms of biological role, probable adapter protein and signal transducer that links members of the tumor necrosis factor receptor family to different signaling pathways by association with the receptor cytoplasmic domain and kinases. This chain is TNF receptor-associated factor family protein DDB_G0285149, found in Dictyostelium discoideum (Social amoeba).